A 1222-amino-acid polypeptide reads, in one-letter code: Deubiquitinating protein VCPIP1 (1222 aa).

Pro residues predominate over residues 1–21; it reads MSQPPPPPPPLPPPPPPPEAP. The interval 1–36 is disordered; that stretch reads MSQPPPPPPPLPPPPPPPEAPQTPSSLASAAASGGL. The span at 25-36 shows a compositional bias: low complexity; sequence SSLASAAASGGL. Residues 208 to 361 enclose the OTU domain; it reads LIPVHVDGDG…RNHYIPLVGI (154 aa). The active site involves Asp-216. Residue Cys-219 is the Nucleophile of the active site. The active site involves His-354. Lys-408 is modified (N6-acetyllysine). Disordered regions lie at residues 725 to 776, 989 to 1009, and 1024 to 1074; these read SVMQ…KEKK, EATTRSRESSPSHGLLKLGSG, and AFQG…VFTA. Ser-747 and Ser-757 each carry phosphoserine. Over residues 755 to 771 the composition is skewed to low complexity; the sequence is PSSAPATPTKAPYSPTT. Residue Thr-763 is modified to Phosphothreonine. Phosphoserine occurs at positions 768, 994, and 998. Residues 1041 to 1050 are compositionally biased toward basic and acidic residues; the sequence is LDPRARETSV. The span at 1057-1074 shows a compositional bias: polar residues; it reads GTDFSNSSTKTEPSVFTA. Phosphoserine is present on Ser-1077. 2 disordered regions span residues 1113–1175 and 1188–1222; these read VSSI…TETT and ATRSKAQRGNSVEELEEMDSQDAEMTNTTEPMDHS. Positions 1143–1157 are enriched in polar residues; sequence VVSSSAKSGSLQTGL. The span at 1163–1175 shows a compositional bias: low complexity; the sequence is LTGGTENLNTETT. Ser-1198 is subject to Phosphoserine. Acidic residues predominate over residues 1200–1209; that stretch reads EELEEMDSQD. Residue Ser-1207 is modified to Phosphoserine; by ATM. A compositionally biased stretch (polar residues) spans 1210–1222; that stretch reads AEMTNTTEPMDHS.

Binds VCP and the ternary complex containing STX5A, NSFL1C and VCP. In terms of processing, phosphorylated at Ser-1207 by ATM or ATR following induction of covalent DNA-protein cross-links (DPCs).

The protein localises to the nucleus. Its subcellular location is the cytoplasm. It is found in the endoplasmic reticulum. It localises to the golgi apparatus. The protein resides in the golgi stack. The catalysed reaction is Thiol-dependent hydrolysis of ester, thioester, amide, peptide and isopeptide bonds formed by the C-terminal Gly of ubiquitin (a 76-residue protein attached to proteins as an intracellular targeting signal).. In terms of biological role, deubiquitinating enzyme involved in DNA repair and reassembly of the Golgi apparatus and the endoplasmic reticulum following mitosis. Necessary for VCP-mediated reassembly of Golgi stacks after mitosis. Plays a role in VCP-mediated formation of transitional endoplasmic reticulum (tER). Mediates dissociation of the ternary complex containing STX5A, NSFL1C and VCP. Also involved in DNA repair following phosphorylation by ATM or ATR: acts by catalyzing deubiquitination of SPRTN, thereby promoting SPRTN recruitment to chromatin and subsequent proteolytic cleavage of covalent DNA-protein cross-links (DPCs). Hydrolyzes 'Lys-11'- and 'Lys-48'-linked polyubiquitin chains. Functionally, (Microbial infection) Regulates the duration of C.botulinum neurotoxin type A (BoNT/A) intoxication by catalyzing deubiquitination of Botulinum neurotoxin A light chain (LC), thereby preventing LC degradation by the proteasome, and accelerating botulinum neurotoxin intoxication in patients. This Homo sapiens (Human) protein is Deubiquitinating protein VCPIP1.